The chain runs to 809 residues: MTLTRREFIKHSGIAAGTLVVTSAAPLPAWAEEKGGKILTAGRWGAMNVEVKDGKIVSSTGALAKTIPNSLQSTAADQVHTTARIQHPMVRKSYLDNPLQPVKGRGEDTYVQVSWEQALKLIHEQHDRIRKANGPSAIFAGSYGWRSSGVLHKAQTLLQRYMNLAGGYSGHSGDYSTGAAQVIMPHVVGSVEVYEQQTSWPLILENSQVVVLWGMNPLNTLKIAWSSTDEQGLEYFHQLKKSGKPVIAIDPIRSETIEFFGDNATWIAPNMGTDVALMLGIAHTLMTQGKHDKVFLEKYTTGYPQFEEYLTGKSDNTPKSAAWAAEITGVPEAQIVKLAELMAANRTMLMAGWGIQRQQYGEQKHWMLVTLAAMLGQIGTPGGGFGFSYHYSNGGNPTRVGGVLPEMSAAIAGQASEAADDGGMTAIPVARIVDALENPGGKYQHNGKEQTYPNIKMIWWAGGGNFTHHQDTNRLIKAWQKPEMIVVSECYWTAAAKHADIVLPITTSFERNDLTMTGDYSNQHIVLMKQAVAPQFEARNDFDVFADLAELLKPGGKEIYTEGKDEMAWLKFFYDAAQKGARAQRVTMPMFNAFWQQNKLIEMRRSEKNEQYIRYGDFRADPVKNALGTPSGKIEIYSRTLEKFGYKDCPAHPTWLAPDEWKGTADEKQLQLLTAHPAHRLHSQLNYAELRKKYAVADREPITIHTEDAARFGIANGDLVRVWNKRGQILTGAVVTDGIKKGVVCVHEGAWPDLENGLCKNGSANVLTADIPSSQLANACAGNSALVYIEKYTGNALKLTAFDQPAVQA.

The segment at residues 1–31 (MTLTRREFIKHSGIAAGTLVVTSAAPLPAWA) is a signal peptide (tat-type signal). Ser-176 serves as a coordination point for Mo-bis(molybdopterin guanine dinucleotide).

The protein belongs to the prokaryotic molybdopterin-containing oxidoreductase family. The cofactor is Mo-bis(molybdopterin guanine dinucleotide). In terms of processing, predicted to be exported by the Tat system. The position of the signal peptide cleavage has not been experimentally proven.

It localises to the periplasm. It catalyses the reaction trimethylamine + 2 Fe(III)-[cytochrome c] + H2O = trimethylamine N-oxide + 2 Fe(II)-[cytochrome c] + 3 H(+). Functionally, reduces trimethylamine-N-oxide (TMAO) into trimethylamine; an anaerobic reaction coupled to energy-yielding reactions. Can also reduce other N- and S-oxide compounds such as 4-methylmorpholine-N-oxide and biotin sulfoxide (BSO), but with a lower catalytic efficiency. This chain is Trimethylamine-N-oxide reductase 2 (torZ), found in Escherichia coli O6:H1 (strain CFT073 / ATCC 700928 / UPEC).